Reading from the N-terminus, the 292-residue chain is Acetylglutamate kinase (292 aa).

Substrate contacts are provided by residues 64 to 65 (GG), Arg86, and Asn190.

The protein belongs to the acetylglutamate kinase family. ArgB subfamily.

The protein resides in the cytoplasm. The catalysed reaction is N-acetyl-L-glutamate + ATP = N-acetyl-L-glutamyl 5-phosphate + ADP. It participates in amino-acid biosynthesis; L-arginine biosynthesis; N(2)-acetyl-L-ornithine from L-glutamate: step 2/4. Catalyzes the ATP-dependent phosphorylation of N-acetyl-L-glutamate. The sequence is that of Acetylglutamate kinase from Geobacter metallireducens (strain ATCC 53774 / DSM 7210 / GS-15).